Here is a 597-residue protein sequence, read N- to C-terminus: Elongation factor 4 (597 aa).

Positions 2 to 184 (KHIRNFSIIA…EIVARIPAPV (183 aa)) constitute a tr-type G domain. GTP-binding positions include 14–19 (DHGKST) and 131–134 (NKID).

Belongs to the TRAFAC class translation factor GTPase superfamily. Classic translation factor GTPase family. LepA subfamily.

The protein resides in the cell inner membrane. The catalysed reaction is GTP + H2O = GDP + phosphate + H(+). Functionally, required for accurate and efficient protein synthesis under certain stress conditions. May act as a fidelity factor of the translation reaction, by catalyzing a one-codon backward translocation of tRNAs on improperly translocated ribosomes. Back-translocation proceeds from a post-translocation (POST) complex to a pre-translocation (PRE) complex, thus giving elongation factor G a second chance to translocate the tRNAs correctly. Binds to ribosomes in a GTP-dependent manner. The chain is Elongation factor 4 from Aeromonas salmonicida (strain A449).